The sequence spans 226 residues: tRNA (guanine-N(7)-)-methyltransferase (226 aa).

The S-adenosyl-L-methionine site is built by Glu57, Glu82, Asp109, and Asp132. Asp132 is a catalytic residue. Residues Lys136, Asp168, and 205–208 (TKFE) each bind substrate.

The protein belongs to the class I-like SAM-binding methyltransferase superfamily. TrmB family.

The enzyme catalyses guanosine(46) in tRNA + S-adenosyl-L-methionine = N(7)-methylguanosine(46) in tRNA + S-adenosyl-L-homocysteine. It participates in tRNA modification; N(7)-methylguanine-tRNA biosynthesis. In terms of biological role, catalyzes the formation of N(7)-methylguanine at position 46 (m7G46) in tRNA. The sequence is that of tRNA (guanine-N(7)-)-methyltransferase from Legionella pneumophila subsp. pneumophila (strain Philadelphia 1 / ATCC 33152 / DSM 7513).